Reading from the N-terminus, the 437-residue chain is uncharacterized protein (437 aa).

3 stretches are compositionally biased toward basic residues: residues 1 to 29 (MDTP…RHRN), 81 to 91 (LRGRHPRVRRV), and 101 to 118 (RRRH…GRNR). 2 disordered regions span residues 1 to 31 (MDTP…RNDH) and 77 to 437 (EHVP…QGTR). Over residues 119 to 132 (HAGDRRAPGVDSRL) the composition is skewed to basic and acidic residues. A compositionally biased stretch (basic residues) spans 133-142 (RQQHQHPRGR). The span at 143 to 164 (HASDRVQDGAHPRRQRLREQPR) shows a compositional bias: basic and acidic residues. The segment covering 165-190 (HAGRPRRRQPPRRGRSRGTHRRHLRQ) has biased composition (basic residues). Composition is skewed to basic and acidic residues over residues 198-209 (GPDEDQAREFRG) and 217-253 (HPPT…EAGR). 2 stretches are compositionally biased toward basic residues: residues 284 to 293 (TVHRGGRLRG) and 324 to 348 (PHSR…RVRH). Low complexity predominate over residues 371 to 382 (DAAAYASVPAHA).

This is an uncharacterized protein from Haloferax lucentense (strain DSM 14919 / JCM 9276 / NCIMB 13854 / Aa 2.2) (Haloferax alicantei).